We begin with the raw amino-acid sequence, 1193 residues long: Tubulin monoglutamylase TTLL4 (1193 aa).

Disordered regions lie at residues 1-37 and 468-535; these read MASA…EKPS and VHLD…CSSL. Positions 24-34 are enriched in polar residues; sequence PSGTVSASPSE. Over residues 472–482 the composition is skewed to basic and acidic residues; the sequence is QPGKEPEEAKD. Over residues 502-515 the composition is skewed to acidic residues; the sequence is EPEDTEDELGDGLE. One can recognise a TTL domain in the interval 599 to 942; the sequence is RRLLRWKMST…VLPNMEDIIS (344 aa). Position 686 is a phosphoserine (Ser686). ATP contacts are provided by residues Lys716, 722 to 723, 744 to 747, and 757 to 759; these read RG, QRYL, and KFD. Arg722 lines the a protein pocket. Arg783 is an L-glutamate binding site. An ATP-binding site is contributed by 804–805; it reads TN. Residues Tyr806, Ser807, and Lys828 each coordinate L-glutamate. Residues Asp888, Glu901, and Asn903 each coordinate Mg(2+). The c-MTBD region stretch occupies residues 913–1027; sequence PLDISIKGQM…RGQFERIFPS (115 aa). L-glutamate is bound at residue Lys919. Low complexity predominate over residues 943 to 960; the sequence is SSSSPSSSSGSSTSLPSS. Disordered regions lie at residues 943–966 and 1092–1193; these read SSSS…DKCQ and MTTS…AVSS. Composition is skewed to polar residues over residues 1092–1102 and 1131–1153; these read MTTSKGDGTPN and SQAG…NTSK. The span at 1168–1182 shows a compositional bias: low complexity; that stretch reads SGQSSRLSAASASQS. The span at 1183 to 1193 shows a compositional bias: polar residues; that stretch reads VTDSRLTAVSS.

The protein belongs to the tubulin--tyrosine ligase family. The cofactor is Mg(2+). As to expression, highly expressed in testis. Expressed in brain, heart, kidney, liver, lung, muscle and spleen. In the brain, expressed in ependymal cilia, the cortex and the striatum. Expressed in blastomere.

It is found in the cytoplasm. Its subcellular location is the cell projection. The protein resides in the cilium. It localises to the cytoskeleton. The protein localises to the cilium basal body. It carries out the reaction L-glutamyl-[protein] + L-glutamate + ATP = gamma-L-glutamyl-L-glutamyl-[protein] + ADP + phosphate + H(+). Monoglutamylase which modifies both tubulin and non-tubulin proteins, adding a single glutamate on the gamma-carboxyl group of specific glutamate residues of target proteins. Involved in the side-chain initiation step of the polyglutamylation reaction but not in the elongation step. Preferentially modifies beta-tail tubulin over the alpha-tubulin. Monoglutamylates nucleosome assembly proteins NAP1L1 and NAP1L4. Monoglutamylates nucleotidyltransferase CGAS, leading to inhibition of CGAS catalytic activity, thereby preventing antiviral defense function. Involved in KLF4 glutamylation which impedes its ubiquitination, thereby leading to somatic cell reprogramming, pluripotency maintenance and embryogenesis. The sequence is that of Tubulin monoglutamylase TTLL4 from Mus musculus (Mouse).